A 449-amino-acid chain; its full sequence is Glutamate--tRNA ligase 2 (449 aa).

The short motif at 17-27 is the 'HIGH' region element; it reads PSPTGFLHVGN. Positions 248 to 252 match the 'KMSKS' region motif; the sequence is ALSKR. K251 provides a ligand contact to ATP.

Belongs to the class-I aminoacyl-tRNA synthetase family. Glutamate--tRNA ligase type 1 subfamily. Monomer.

Its subcellular location is the cytoplasm. The catalysed reaction is tRNA(Glu) + L-glutamate + ATP = L-glutamyl-tRNA(Glu) + AMP + diphosphate. Functionally, catalyzes the attachment of glutamate to tRNA(Glu) in a two-step reaction: glutamate is first activated by ATP to form Glu-AMP and then transferred to the acceptor end of tRNA(Glu). This is Glutamate--tRNA ligase 2 from Jannaschia sp. (strain CCS1).